A 456-amino-acid chain; its full sequence is Bifunctional protein GlmU (456 aa).

The interval 1 to 229 (MLNNAMSVVI…LSEVEGVNNR (229 aa)) is pyrophosphorylase. Residues 11 to 14 (LAAG), Lys-25, Gln-76, 81 to 82 (GT), 103 to 105 (YGD), Gly-140, Glu-154, Asn-169, and Asn-227 each bind UDP-N-acetyl-alpha-D-glucosamine. Asp-105 lines the Mg(2+) pocket. A Mg(2+)-binding site is contributed by Asn-227. The interval 230-250 (LQLSRLERVYQFEQAEKLLLA) is linker. An N-acetyltransferase region spans residues 251–456 (GVMLRDPARF…EGWRRPVKKK (206 aa)). Arg-333 and Lys-351 together coordinate UDP-N-acetyl-alpha-D-glucosamine. Residue His-363 is the Proton acceptor of the active site. Residues Tyr-366 and Asn-377 each coordinate UDP-N-acetyl-alpha-D-glucosamine. Acetyl-CoA is bound by residues Ala-380, 386 to 387 (NY), Ser-405, Ala-423, and Arg-440.

This sequence in the N-terminal section; belongs to the N-acetylglucosamine-1-phosphate uridyltransferase family. In the C-terminal section; belongs to the transferase hexapeptide repeat family. In terms of assembly, homotrimer. Mg(2+) serves as cofactor.

The protein resides in the cytoplasm. The catalysed reaction is alpha-D-glucosamine 1-phosphate + acetyl-CoA = N-acetyl-alpha-D-glucosamine 1-phosphate + CoA + H(+). The enzyme catalyses N-acetyl-alpha-D-glucosamine 1-phosphate + UTP + H(+) = UDP-N-acetyl-alpha-D-glucosamine + diphosphate. Its pathway is nucleotide-sugar biosynthesis; UDP-N-acetyl-alpha-D-glucosamine biosynthesis; N-acetyl-alpha-D-glucosamine 1-phosphate from alpha-D-glucosamine 6-phosphate (route II): step 2/2. It functions in the pathway nucleotide-sugar biosynthesis; UDP-N-acetyl-alpha-D-glucosamine biosynthesis; UDP-N-acetyl-alpha-D-glucosamine from N-acetyl-alpha-D-glucosamine 1-phosphate: step 1/1. It participates in bacterial outer membrane biogenesis; LPS lipid A biosynthesis. In terms of biological role, catalyzes the last two sequential reactions in the de novo biosynthetic pathway for UDP-N-acetylglucosamine (UDP-GlcNAc). The C-terminal domain catalyzes the transfer of acetyl group from acetyl coenzyme A to glucosamine-1-phosphate (GlcN-1-P) to produce N-acetylglucosamine-1-phosphate (GlcNAc-1-P), which is converted into UDP-GlcNAc by the transfer of uridine 5-monophosphate (from uridine 5-triphosphate), a reaction catalyzed by the N-terminal domain. The chain is Bifunctional protein GlmU from Escherichia coli O7:K1 (strain IAI39 / ExPEC).